The sequence spans 756 residues: Cartilage oligomeric matrix protein (756 aa).

Residues 1-20 (MVLAAARVLLLTLAALGASG) form the signal peptide. The tract at residues 22-85 (GQMPLGGDLG…PARTPKLTVR (64 aa)) is COMP N-terminal. Residues 86 to 125 (PLSQCSPGFCFPGVACTETANGARCGPCPEGFTGNGSHCA) form the EGF-like 1 domain. Disulfide bonds link cysteine 90-cysteine 101, cysteine 95-cysteine 110, cysteine 113-cysteine 124, cysteine 130-cysteine 141, cysteine 135-cysteine 150, cysteine 183-cysteine 196, cysteine 190-cysteine 205, cysteine 228-cysteine 242, cysteine 236-cysteine 252, and cysteine 254-cysteine 265. N-linked (GlcNAc...) asparagine glycosylation is present at asparagine 120. One can recognise an EGF-like 2; calcium-binding domain in the interval 126–178 (DVNECTAHPCFPRVRCINTSPGFRCEACPPGFSGPTHEGVGLAFAKANKQVCT). The EGF-like 3; calcium-binding domain maps to 179-218 (DINECETGQHNCVPNSVCVNTVGSFQCGPCQPGFVGDQAS). In terms of domain architecture, EGF-like 4 spans 224–266 (PQRFCPDGTPSPCHEKADCVLERDGSRSCVCAVGWAGNGLICG). 8 TSP type-3 repeats span residues 267-299 (RDTD…NSGQ), 300-335 (EDVD…NPDQ), 336-358 (RNTD…NDDQ), 359-394 (KDTD…NSDQ), 395-417 (KDTD…NADQ), 418-455 (RDVD…NSAQ), 456-491 (QDSD…NPGQ), and 492-527 (EDMD…EVTL). Residues 322–502 (NEKDNCPLVR…DMDRDGVGDA (181 aa)) form a disordered region. Composition is skewed to basic and acidic residues over residues 333–345 (PDQR…KWGD), 351–369 (RSQK…RGDA), and 415–425 (ADQRDVDHDFV). Positions 366–368 (RGD) match the Cell attachment site motif. Acidic residues predominate over residues 466-475 (ACDDDDDNDG). Positions 526–756 (TLTDFRAFQT…DYEAQRLLQA (231 aa)) are mediates cell survival and induction of the IAP family of survival proteins. Positions 531–745 (RAFQTVVLDP…LRYRCNDTIP (215 aa)) constitute a TSP C-terminal domain. N-linked (GlcNAc...) asparagine glycosylation occurs at asparagine 741.

It belongs to the thrombospondin family. Pentamer; disulfide-linked. Exists in a more compact conformation in the presence of calcium and shows a more extended conformation in the absence of calcium. Interacts with ITGB3, ITGA5 and FN1. Binding to FN1 requires the presence of divalent cations (Ca(2+), Mg(2+) or Mn(2+)). The greatest amount of binding is seen in the presence of Mn(2+). Interacts with MATN1, MATN3, MATN4 and ACAN. Binds heparin, heparan sulfate and chondroitin sulfate. EDTA dimishes significantly its binding to ACAN and abolishes its binding to MATN3, MATN4 and chondroitin sulfate. Interacts with collagen I, II and IX, and interaction with these collagens is dependent on the presence of zinc ions. Interacts with ADAMTS12. Interacts with ITGA7. The cofactor is Ca(2+). Proteolytically cleaved by metalloproteases ADAMTS4 and ADAMTS1 with ADAMTS4 showing more potent activity.

It is found in the secreted. Its subcellular location is the extracellular space. It localises to the extracellular matrix. Functionally, plays a role in the structural integrity of cartilage via its interaction with other extracellular matrix proteins such as the collagens and fibronectin. Can mediate the interaction of chondrocytes with the cartilage extracellular matrix through interaction with cell surface integrin receptors. Could play a role in the pathogenesis of osteoarthritis. Potent suppressor of apoptosis in both primary chondrocytes and transformed cells. Suppresses apoptosis by blocking the activation of caspase-3 and by inducing the IAP family of survival proteins (BIRC3, BIRC2, BIRC5 and XIAP). Essential for maintaining a vascular smooth muscle cells (VSMCs) contractile/differentiated phenotype under physiological and pathological stimuli. Maintains this phenotype of VSMCs by interacting with ITGA7. The polypeptide is Cartilage oligomeric matrix protein (COMP) (Bos taurus (Bovine)).